The chain runs to 471 residues: Apyrase 1 (471 aa).

Residues 1 to 21 (MTAKRAIGRHESLADKVHRHR) are Cytoplasmic-facing. Residues 22–42 (GLLLVISIPIVLIALVLLLMP) form a helical; Signal-anchor for type II membrane protein membrane-spanning segment. Residues 43 to 471 (GTSTSVSVIE…GSAIEAVSSP (429 aa)) lie on the Lumenal side of the membrane. 72-82 (VIFDAGSSGSR) contributes to the ATP binding site. Glutamate 194 functions as the Proton acceptor in the catalytic mechanism. 218–228 (GVVDLGGGSVQ) is a binding site for ATP. N-linked (GlcNAc...) asparagine glycosylation occurs at asparagine 333.

Belongs to the GDA1/CD39 NTPase family. Ca(2+) serves as cofactor. In terms of tissue distribution, expressed in roots, root hairs, root cap, leaves, stems, trichomes, phloem throughout the plant, guard cells, filaments of young stamens, stipules, papillae of stigmas, pollen, pollen tubes and the abscission zone of siliques.

It is found in the golgi apparatus membrane. It localises to the membrane. It carries out the reaction a ribonucleoside 5'-triphosphate + 2 H2O = a ribonucleoside 5'-phosphate + 2 phosphate + 2 H(+). Its function is as follows. Catalyzes the hydrolysis of phosphoanhydride bonds of nucleoside tri- and di-phosphates. Substrate preference is ATP &gt; ADP. Functions with APY2 to reduce extracellular ATP level which is essential for pollen germination and normal plant development. Plays a role in the regulation of stomatal function by modulating extracellular ATP levels in guard cells. The polypeptide is Apyrase 1 (APY1) (Arabidopsis thaliana (Mouse-ear cress)).